The primary structure comprises 443 residues: Phosphoglucosamine mutase (443 aa).

The Phosphoserine intermediate role is filled by Ser-100. The Mg(2+) site is built by Ser-100, Asp-239, Asp-241, and Asp-243. Position 100 is a phosphoserine (Ser-100).

This sequence belongs to the phosphohexose mutase family. Mg(2+) serves as cofactor. Post-translationally, activated by phosphorylation.

The enzyme catalyses alpha-D-glucosamine 1-phosphate = D-glucosamine 6-phosphate. Its function is as follows. Catalyzes the conversion of glucosamine-6-phosphate to glucosamine-1-phosphate. The protein is Phosphoglucosamine mutase of Shewanella sediminis (strain HAW-EB3).